We begin with the raw amino-acid sequence, 408 residues long: MNFKKTLLSIAIASASLTPAFSYSAPLLLDNTVHQTSQIAGANAWLEISLGQFKSNIEQFKSHIAPQTKICAVMKADAYGNGIRGLMPTILEQQIPCVAIASNAEAKLVRESGFEGELIRVRSASTSEIEQALSLDIEELIGSEQQARELASLAEKYSKTIKVHLALNDGGMGRNGIDMSTERGPKEAVAIATHPSVAVVGIMTHFPNYNAEDVRTKLKSFNQHAQWLMESAGLKREEITLHVANSYTALNVPEAQLDMVRPGGVLYGDLPTNPEYPSIVAFKTRVASLHSLPAGSTVGYDSTFTTANDAVMANLTVGYSDGYPRKMGNKAQVLINGQRANVVGVASMNTTMVDVSNIKGVLPGDEVTLFGAQKNQHISVGEMEENAEVIFPELYTIWGTSNPRFYVK.

A signal peptide spans 1–24 (MNFKKTLLSIAIASASLTPAFSYS). Cys-71 and Cys-97 are oxidised to a cystine. Residue Lys-75 is the Proton acceptor of the active site. Lys-75 is subject to N6-(pyridoxal phosphate)lysine. Arg-174 is a binding site for substrate. The active-site Proton acceptor is Tyr-300. Residue Met-348 participates in substrate binding.

This sequence belongs to the alanine racemase family. Bsr subfamily. Pyridoxal 5'-phosphate serves as cofactor.

Its subcellular location is the periplasm. The enzyme catalyses an L-alpha-amino acid = a D-alpha-amino acid. It catalyses the reaction L-lysine = D-lysine. The catalysed reaction is L-arginine = D-arginine. In terms of biological role, amino-acid racemase able to utilize a broad range of substrates. This is Broad specificity amino-acid racemase (alr) from Vibrio vulnificus (strain CMCP6).